Here is a 279-residue protein sequence, read N- to C-terminus: Ribosomal RNA small subunit methyltransferase A (279 aa).

The S-adenosyl-L-methionine site is built by His-11, Leu-13, Gly-42, Glu-63, Asp-88, and Asn-104.

Belongs to the class I-like SAM-binding methyltransferase superfamily. rRNA adenine N(6)-methyltransferase family. RsmA subfamily.

The protein resides in the cytoplasm. It catalyses the reaction adenosine(1518)/adenosine(1519) in 16S rRNA + 4 S-adenosyl-L-methionine = N(6)-dimethyladenosine(1518)/N(6)-dimethyladenosine(1519) in 16S rRNA + 4 S-adenosyl-L-homocysteine + 4 H(+). Its function is as follows. Specifically dimethylates two adjacent adenosines (A1518 and A1519) in the loop of a conserved hairpin near the 3'-end of 16S rRNA in the 30S particle. May play a critical role in biogenesis of 30S subunits. The sequence is that of Ribosomal RNA small subunit methyltransferase A from Synechococcus sp. (strain JA-3-3Ab) (Cyanobacteria bacterium Yellowstone A-Prime).